A 152-amino-acid chain; its full sequence is Ribosome maturation factor RimP (152 aa).

Belongs to the RimP family.

The protein resides in the cytoplasm. Required for maturation of 30S ribosomal subunits. The polypeptide is Ribosome maturation factor RimP (Burkholderia orbicola (strain MC0-3)).